A 460-amino-acid chain; its full sequence is Argininosuccinate lyase (460 aa).

It belongs to the lyase 1 family. Argininosuccinate lyase subfamily.

It localises to the cytoplasm. It carries out the reaction 2-(N(omega)-L-arginino)succinate = fumarate + L-arginine. It functions in the pathway amino-acid biosynthesis; L-arginine biosynthesis; L-arginine from L-ornithine and carbamoyl phosphate: step 3/3. The sequence is that of Argininosuccinate lyase from Desulforamulus reducens (strain ATCC BAA-1160 / DSM 100696 / MI-1) (Desulfotomaculum reducens).